A 417-amino-acid polypeptide reads, in one-letter code: Gamma-glutamyl phosphate reductase (417 aa).

The protein belongs to the gamma-glutamyl phosphate reductase family.

It localises to the cytoplasm. The enzyme catalyses L-glutamate 5-semialdehyde + phosphate + NADP(+) = L-glutamyl 5-phosphate + NADPH + H(+). Its pathway is amino-acid biosynthesis; L-proline biosynthesis; L-glutamate 5-semialdehyde from L-glutamate: step 2/2. Catalyzes the NADPH-dependent reduction of L-glutamate 5-phosphate into L-glutamate 5-semialdehyde and phosphate. The product spontaneously undergoes cyclization to form 1-pyrroline-5-carboxylate. In Escherichia coli (strain K12 / MC4100 / BW2952), this protein is Gamma-glutamyl phosphate reductase.